A 372-amino-acid chain; its full sequence is Hydrogenase-1 small chain (372 aa).

The tat-type signal signal peptide spans 1–45 (MNNEETFYQAMRRQGVTRRSFLKYCSLAATSLGLGAGMAPKIAWA). Topologically, residues 46-326 (LENKPRIPVV…QMGTHSTADT (281 aa)) are periplasmic. [4Fe-4S] cluster-binding residues include C62, C65, C160, C194, H232, C235, C260, and C266. [3Fe-4S] cluster is bound by residues C275, C294, and C297. Residues 327–347 (VGLTALGVVAAAVGVHAVASA) form a helical membrane-spanning segment. Residues 347 to 372 (AVDQRRRHNQQPTETEHQPGNEDKQA) form a disordered region. Topologically, residues 348–372 (VDQRRRHNQQPTETEHQPGNEDKQA) are cytoplasmic. The span at 360-372 (ETEHQPGNEDKQA) shows a compositional bias: basic and acidic residues.

The protein belongs to the [NiFe]/[NiFeSe] hydrogenase small subunit family. In terms of assembly, heterodimer of a large and a small subunit. It depends on [4Fe-4S] cluster as a cofactor. Requires [3Fe-4S] cluster as cofactor. In terms of processing, predicted to be exported by the Tat system. The position of the signal peptide cleavage has not been experimentally proven.

Its subcellular location is the cell inner membrane. It catalyses the reaction H2 + A = AH2. In terms of biological role, this is one of three E.coli hydrogenases synthesized in response to different physiological conditions. HYD1 is believed to have a role in hydrogen cycling during fermentative growth. The chain is Hydrogenase-1 small chain (hyaA) from Escherichia coli O6:H1 (strain CFT073 / ATCC 700928 / UPEC).